The sequence spans 458 residues: Opine oxidase subunit A (458 aa).

This sequence to T-protein and to dimethylglycine dehydrogenase. As to quaternary structure, heterodimer of a subunit A and a subunit B.

Its pathway is opine metabolism; octopine degradation. Its function is as follows. Oxidative cleavage of octopine into L-arginine and pyruvate. In Rhizobium meliloti (strain 1021) (Ensifer meliloti), this protein is Opine oxidase subunit A (ooxA).